We begin with the raw amino-acid sequence, 289 residues long: MPARASRPAPGLPARAGLGFKPEHYATLVEQPPDLGFFEIHAENYMVPGGPAHAQLAWLRERYAISVHGVGLSLGGHDPLDARLLAGHRQLQRRYAPDSISEHLAWSRHDGRYFNDLLPIVYDDAALRRVCAHIDQFQQCLGQPILLENPATYVRFEASHIDEAQFLCELVARTGCGLLLDVNNVYVSAVNHGFDARAYLARLPLAAVGEIHLAGHARQRDAHGRAVLIDSHDAPVDEAVWDLYEYTLALTGPVATLLERDGNIPPLAALLAETDRVAACLARGLALAA.

The protein belongs to the UPF0276 family.

The sequence is that of UPF0276 protein BB1291 from Bordetella bronchiseptica (strain ATCC BAA-588 / NCTC 13252 / RB50) (Alcaligenes bronchisepticus).